Here is a 309-residue protein sequence, read N- to C-terminus: Cytochrome c biogenesis protein CcsA (309 aa).

8 consecutive transmembrane segments (helical) span residues 18-38 (LGIL…GAVF), 43-63 (FFIV…QLLF), 67-87 (ISGH…AWGI), 102-122 (IIPS…CFVL), 148-168 (VMLS…VLFI), 216-236 (SILI…VWAN), 250-267 (TWAF…HMRI), and 279-299 (LATS…FLGI).

The protein belongs to the CcmF/CycK/Ccl1/NrfE/CcsA family. In terms of assembly, may interact with ccs1.

The protein localises to the cellular thylakoid membrane. Its function is as follows. Required during biogenesis of c-type cytochromes (cytochrome c6 and cytochrome f) at the step of heme attachment. The chain is Cytochrome c biogenesis protein CcsA from Prochlorococcus marinus (strain MIT 9312).